A 445-amino-acid chain; its full sequence is Anthranilate N-benzoyltransferase protein 3 (445 aa).

Residues His-164 and Asp-392 each act as proton acceptor in the active site.

This sequence belongs to the plant acyltransferase family. In terms of processing, N-terminus is blocked.

It carries out the reaction anthranilate + benzoyl-CoA = N-benzoylanthranilate + CoA. It functions in the pathway phytoalexin biosynthesis; methoxydianthramide B biosynthesis. Functionally, catalyzes the formation of N-benzoylanthranilate, in the course of methoxydianthramide B, a phytoalexin. Phytoalexins are produced in response to infection by parasites, and are essential for the expression of disease resistance. The chain is Anthranilate N-benzoyltransferase protein 3 (HCBT3) from Dianthus caryophyllus (Carnation).